We begin with the raw amino-acid sequence, 144 residues long: MRLNTLSPAEGSKKAGKRLGRGIGSGLGKTGGRGHKGQKSRSGGGVRRGFEGGQMPLYRRLPKFGFTSRKAAITAEVRLSDLAKVEGGVVDLNTLKATNIIGIQIEFAKVILAGEVTTPVTVRGLRVTKGARAAIEAAGGKIEE.

Residues 1-54 form a disordered region; it reads MRLNTLSPAEGSKKAGKRLGRGIGSGLGKTGGRGHKGQKSRSGGGVRRGFEGGQ. The span at 21 to 31 shows a compositional bias: gly residues; sequence RGIGSGLGKTG.

Belongs to the universal ribosomal protein uL15 family. In terms of assembly, part of the 50S ribosomal subunit.

In terms of biological role, binds to the 23S rRNA. The sequence is that of Large ribosomal subunit protein uL15 from Salmonella arizonae (strain ATCC BAA-731 / CDC346-86 / RSK2980).